The chain runs to 317 residues: 4-hydroxy-3-methylbut-2-enyl diphosphate reductase (317 aa).

Residue cysteine 12 participates in [4Fe-4S] cluster binding. Residues histidine 41 and histidine 74 each coordinate (2E)-4-hydroxy-3-methylbut-2-enyl diphosphate. Dimethylallyl diphosphate contacts are provided by histidine 41 and histidine 74. Residues histidine 41 and histidine 74 each contribute to the isopentenyl diphosphate site. Cysteine 96 contributes to the [4Fe-4S] cluster binding site. Residue histidine 124 participates in (2E)-4-hydroxy-3-methylbut-2-enyl diphosphate binding. A dimethylallyl diphosphate-binding site is contributed by histidine 124. Residue histidine 124 participates in isopentenyl diphosphate binding. Glutamate 126 acts as the Proton donor in catalysis. A (2E)-4-hydroxy-3-methylbut-2-enyl diphosphate-binding site is contributed by threonine 169. [4Fe-4S] cluster is bound at residue cysteine 199. Residues serine 227, serine 228, asparagine 229, and serine 271 each coordinate (2E)-4-hydroxy-3-methylbut-2-enyl diphosphate. Positions 227, 228, 229, and 271 each coordinate dimethylallyl diphosphate. Residues serine 227, serine 228, asparagine 229, and serine 271 each coordinate isopentenyl diphosphate.

The protein belongs to the IspH family. [4Fe-4S] cluster serves as cofactor.

It carries out the reaction isopentenyl diphosphate + 2 oxidized [2Fe-2S]-[ferredoxin] + H2O = (2E)-4-hydroxy-3-methylbut-2-enyl diphosphate + 2 reduced [2Fe-2S]-[ferredoxin] + 2 H(+). It catalyses the reaction dimethylallyl diphosphate + 2 oxidized [2Fe-2S]-[ferredoxin] + H2O = (2E)-4-hydroxy-3-methylbut-2-enyl diphosphate + 2 reduced [2Fe-2S]-[ferredoxin] + 2 H(+). It functions in the pathway isoprenoid biosynthesis; dimethylallyl diphosphate biosynthesis; dimethylallyl diphosphate from (2E)-4-hydroxy-3-methylbutenyl diphosphate: step 1/1. The protein operates within isoprenoid biosynthesis; isopentenyl diphosphate biosynthesis via DXP pathway; isopentenyl diphosphate from 1-deoxy-D-xylulose 5-phosphate: step 6/6. In terms of biological role, catalyzes the conversion of 1-hydroxy-2-methyl-2-(E)-butenyl 4-diphosphate (HMBPP) into a mixture of isopentenyl diphosphate (IPP) and dimethylallyl diphosphate (DMAPP). Acts in the terminal step of the DOXP/MEP pathway for isoprenoid precursor biosynthesis. This is 4-hydroxy-3-methylbut-2-enyl diphosphate reductase from Vibrio parahaemolyticus serotype O3:K6 (strain RIMD 2210633).